The chain runs to 70 residues: uncharacterized protein (70 aa).

The segment at 40–70 (LHQQRTAHKVTSPPSQRPQNSETKSDSQNRS) is disordered. The segment covering 51-61 (SPPSQRPQNSE) has biased composition (polar residues).

This is an uncharacterized protein from Bdellovibrio phage phiMH2K (Bacteriophage phiMH2K).